Consider the following 261-residue polypeptide: Phosphatidylglycerol--prolipoprotein diacylglyceryl transferase (261 aa).

7 helical membrane-spanning segments follow: residues 19 to 39, 56 to 76, 92 to 112, 126 to 146, 173 to 193, 199 to 219, and 227 to 247; these read VHWY…LALY, LIFY…MLFY, WRGG…TWIF, FVVP…FING, QLYE…WFSA, FAVS…AEFF, and GFVA…MIII. A 1,2-diacyl-sn-glycero-3-phospho-(1'-sn-glycerol) is bound at residue Arg139.

Belongs to the Lgt family.

The protein resides in the cell inner membrane. The catalysed reaction is L-cysteinyl-[prolipoprotein] + a 1,2-diacyl-sn-glycero-3-phospho-(1'-sn-glycerol) = an S-1,2-diacyl-sn-glyceryl-L-cysteinyl-[prolipoprotein] + sn-glycerol 1-phosphate + H(+). It functions in the pathway protein modification; lipoprotein biosynthesis (diacylglyceryl transfer). Catalyzes the transfer of the diacylglyceryl group from phosphatidylglycerol to the sulfhydryl group of the N-terminal cysteine of a prolipoprotein, the first step in the formation of mature lipoproteins. The protein is Phosphatidylglycerol--prolipoprotein diacylglyceryl transferase of Coxiella burnetii (strain CbuK_Q154) (Coxiella burnetii (strain Q154)).